The chain runs to 89 residues: Small ribosomal subunit protein uS15 (89 aa).

It belongs to the universal ribosomal protein uS15 family. As to quaternary structure, part of the 30S ribosomal subunit. Forms a bridge to the 50S subunit in the 70S ribosome, contacting the 23S rRNA.

In terms of biological role, one of the primary rRNA binding proteins, it binds directly to 16S rRNA where it helps nucleate assembly of the platform of the 30S subunit by binding and bridging several RNA helices of the 16S rRNA. Its function is as follows. Forms an intersubunit bridge (bridge B4) with the 23S rRNA of the 50S subunit in the ribosome. The sequence is that of Small ribosomal subunit protein uS15 from Bacteroides thetaiotaomicron (strain ATCC 29148 / DSM 2079 / JCM 5827 / CCUG 10774 / NCTC 10582 / VPI-5482 / E50).